The primary structure comprises 408 residues: GPI transamidase component GAB1 homolog (408 aa).

Helical transmembrane passes span 9–29 (LLGL…TWIA), 66–86 (VFYQ…LGGI), 88–108 (VTRF…YLIA), 125–145 (PLWI…GIAC), 149–169 (MILN…SYAI), 207–227 (IFVV…FFLN), 266–286 (FFLF…SIRL), 303–323 (LFKA…LPIF), 339–359 (AIVF…TLGC), and 370–390 (LILA…LLLV). Residues 247–267 (PNLGLWWYFFTEMFNEFRTFF) are may be involved in recognition of long-chain fatty acids in GPI.

Belongs to the PIGU family. Forms a complex with PIG-S homolog, PIG-T homolog and GPI8.

It localises to the endoplasmic reticulum membrane. The protein operates within glycolipid biosynthesis; glycosylphosphatidylinositol-anchor biosynthesis. Its function is as follows. Component of the GPI transamidase complex. May be involved in the recognition of either the GPI attachment signal or the lipid portion of GPI. The sequence is that of GPI transamidase component GAB1 homolog from Schizosaccharomyces pombe (strain 972 / ATCC 24843) (Fission yeast).